The primary structure comprises 454 residues: Caspase-9 (454 aa).

In terms of domain architecture, CARD spans 1 to 92 (MDEADRQLLR…GTLASLLQSG (92 aa)). Thr-163 is modified (phosphothreonine; by MAPK1). The residue at position 191 (Tyr-191) is a Phosphotyrosine; by ABL1. Active-site residues include His-275 and Cys-325. Ser-340 and Ser-348 each carry phosphoserine. Positions 354–367 (AVPYQEGPRPLDQL) are excised as a propeptide.

The protein belongs to the peptidase C14A family. As to quaternary structure, heterotetramer that consists of two anti-parallel arranged heterodimers, each one formed by a 35 kDa (p35) and a 10 kDa (p10) subunit. Caspase-9 and APAF1 bind to each other via their respective NH2-terminal CED-3 homologous domains in the presence of cytochrome C and ATP. Interacts (inactive form) with EFHD2. Interacts with HAX1. Interacts with BIRC2/c-IAP1, XIAP/BIRC4, BIRC5/survivin, BIRC6/bruce and BIRC7/livin. Interacts with ABL1 (via SH3 domain); the interaction is direct and increased in the response of cells to genotoxic stress and ABL1/c-Abl activation. Interacts with BCL2L10. Post-translationally, cleavages at Asp-353 by granzyme B and at Asp-368 by caspase-3 generate the two active subunits. Caspase-8 and -10 can also be involved in these processing events. Phosphorylated at Thr-163 by MAPK1/ERK2. Phosphorylation at Thr-163 is sufficient to block caspase-9 processing and subsequent caspase-3 activation. Phosphorylation on Tyr-191 by ABL1/c-Abl; occurs in the response of cells to DNA damage. In terms of processing, ubiquitinated by BIRC6; this activity is inhibited by DIABLO/SMAC.

It carries out the reaction Strict requirement for an Asp residue at position P1 and with a marked preference for His at position P2. It has a preferred cleavage sequence of Leu-Gly-His-Asp-|-Xaa.. Its activity is regulated as follows. Inhibited by BIRC6; following inhibition of BIRC6-caspase binding by DIABLO/SMAC, BIRC6 is subjected to caspase cleavage, leading to an increase in active caspases. Involved in the activation cascade of caspases responsible for apoptosis execution. Binding of caspase-9 to Apaf-1 leads to activation of the protease which then cleaves and activates effector caspases caspase-3 (CASP3) or caspase-7 (CASP7). Promotes DNA damage-induced apoptosis in a ABL1/c-Abl-dependent manner. Proteolytically cleaves poly(ADP-ribose) polymerase (PARP). Cleaves BIRC6 following inhibition of BIRC6-caspase binding by DIABLO/SMAC. The protein is Caspase-9 (Casp9) of Mus musculus (Mouse).